A 508-amino-acid chain; its full sequence is MLIVCRNSKSQDLDLYVKGVHFHLNKTLAKRSAKVTTLLESNKLHELRWIIRDMDINPSIFHLVTRFCYGYKIELSADNIVSVLCIAYYLEMSDDHSSNNLLNKAVTFLEQRVLMSWSETVKALCICSDKILDKLANVGLIEVFLDSLIEKALNDTRLLQDLITLPLRLYEPLILEVSKHNVSLENLVASVCNYANRWVFEKDSGDGSVSRNKREGIEAVERLLPHQRGTISSGFLFKSLKESIFLGACSDCRKGFEVRISNQLDMARAKDLQILSPTEDGSYDIELLKTILKSFYSNDSVPDLSRFVSVARMLEEFLLEAAASDAGLRVGTFKELAEIAVAASCDVLSYSDGIYRAIDVYLERHRDLIESEKMEACRFLHCKKLSPEACEHASKNEKLPLRIVMQVLFVSQMQIRDKVAREMKGVVERTENQVDEVESMSKKLLKLEIEPDYMKKRKIENLECVVHCEKKKTSVWREVKRKFGCMTSSTMDACSCHIKKRKTYHSYK.

Residues 11-77 (QDLDLYVKGV…CYGYKIELSA (67 aa)) enclose the BTB domain. An NPH3 domain is found at 156–414 (TRLLQDLITL…MQVLFVSQMQ (259 aa)). Tyr-355 is subject to Phosphotyrosine.

This sequence belongs to the NPH3 family.

It participates in protein modification; protein ubiquitination. May act as a substrate-specific adapter of an E3 ubiquitin-protein ligase complex (CUL3-RBX1-BTB) which mediates the ubiquitination and subsequent proteasomal degradation of target proteins. In Arabidopsis thaliana (Mouse-ear cress), this protein is BTB/POZ domain-containing protein At3g03510.